Reading from the N-terminus, the 1074-residue chain is Phospholipase D1 (1074 aa).

One can recognise a PX domain in the interval 81 to 212; sequence VKAQVLEVER…TEFLDVSQLS (132 aa). The region spanning 219-328 is the PH domain; it reads PKGLEGMIMK…WGGAIEEFIQ (110 aa). S-palmitoyl cysteine attachment occurs at residues cysteine 240 and cysteine 241. The region spanning 459-486 is the PLD phosphodiesterase 1 domain; that stretch reads YLWAHHEKLVIIDQSVAFVGGIDLAYGR. A catalytic region spans residues 463–928; sequence HHEKLVIIDQ…MLGKRDSEMA (466 aa). Serine 499, serine 561, and serine 629 each carry phosphoserine. The PLD phosphodiesterase 2 domain occupies 891 to 918; it reads ELIYVHSKLLIADDNTVIIGSANINDRS.

The protein belongs to the phospholipase D family. Interacts with PIP5K1B. In terms of processing, phosphorylated on serine and threonine residues. Post-translationally, it is uncertain whether palmitoylation is on Cys-240 and/or Cys-241. Palmitoylation is required prior to phosphorylation.

It is found in the cytoplasm. Its subcellular location is the perinuclear region. The protein resides in the endoplasmic reticulum membrane. The protein localises to the golgi apparatus membrane. It localises to the late endosome membrane. The catalysed reaction is a 1,2-diacyl-sn-glycero-3-phosphocholine + H2O = a 1,2-diacyl-sn-glycero-3-phosphate + choline + H(+). It catalyses the reaction ethanol + a 1,2-diacyl-sn-glycero-3-phosphocholine = 1,2-diacyl-sn-glycero-3-phosphoethanol + choline. It carries out the reaction 1,2-dihexadecanoyl-sn-glycero-3-phosphocholine + H2O = 1,2-dihexadecanoyl-sn-glycero-3-phosphate + choline + H(+). With respect to regulation, stimulated by phosphatidylinositol 4,5-bisphosphate and phosphatidylinositol 3,4,5-trisphosphate, activated by the phosphokinase C-alpha, by the ADP-ribosylation factor-1 (ARF-1), and to a lesser extent by GTP-binding proteins: RHO A, RAC-1 and CDC42. Inhibited by oleate. In terms of biological role, function as phospholipase selective for phosphatidylcholine. Implicated as a critical step in numerous cellular pathways, including signal transduction, membrane trafficking, and the regulation of mitosis. May be involved in the regulation of perinuclear intravesicular membrane traffic. This chain is Phospholipase D1, found in Rattus norvegicus (Rat).